The chain runs to 306 residues: Erythromycin 3''-O-methyltransferase (306 aa).

S-adenosyl-L-methionine is bound by residues Leu157 and His162.

The protein belongs to the methyltransferase superfamily.

The catalysed reaction is erythromycin C + S-adenosyl-L-methionine = erythromycin A + S-adenosyl-L-homocysteine + H(+). The enzyme catalyses erythromycin D + S-adenosyl-L-methionine = erythromycin B + S-adenosyl-L-homocysteine + H(+). It functions in the pathway antibiotic biosynthesis; erythromycin biosynthesis. Its function is as follows. S-adenosyl-L-methionine-dependent O-methyltransferase that catalyzes the last step in the erythromycin biosynthesis pathway. Methylates the position 3 of the mycarosyl moiety of erythromycin C, forming the most active form of the antibiotic, erythromycin A. Can also methylate the precursor erythromycin D, forming erythromycin B. The polypeptide is Erythromycin 3''-O-methyltransferase (eryG) (Saccharopolyspora erythraea (strain ATCC 11635 / DSM 40517 / JCM 4748 / NBRC 13426 / NCIMB 8594 / NRRL 2338)).